Here is a 362-residue protein sequence, read N- to C-terminus: Fructose-bisphosphate aldolase (362 aa).

Serine 65 contributes to the D-glyceraldehyde 3-phosphate binding site. Aspartate 112 acts as the Proton donor in catalysis. Positions 113, 147, 177, and 229 each coordinate Zn(2+). Glycine 230 serves as a coordination point for dihydroxyacetone phosphate. Position 268 (histidine 268) interacts with Zn(2+). Dihydroxyacetone phosphate-binding positions include 269–271 and 290–293; these read GGS and NVDT.

Belongs to the class II fructose-bisphosphate aldolase family. As to quaternary structure, homodimer. The cofactor is Zn(2+).

The enzyme catalyses beta-D-fructose 1,6-bisphosphate = D-glyceraldehyde 3-phosphate + dihydroxyacetone phosphate. It participates in carbohydrate degradation; glycolysis; D-glyceraldehyde 3-phosphate and glycerone phosphate from D-glucose: step 4/4. In terms of biological role, catalyzes the aldol condensation of dihydroxyacetone phosphate (DHAP or glycerone-phosphate) with glyceraldehyde 3-phosphate (G3P) to form fructose 1,6-bisphosphate (FBP) in gluconeogenesis and the reverse reaction in glycolysis. The protein is Fructose-bisphosphate aldolase (fbaA) of Aspergillus oryzae (strain ATCC 42149 / RIB 40) (Yellow koji mold).